The chain runs to 181 residues: Protein GrpE (181 aa).

The segment covering Met1 to Ser12 has biased composition (polar residues). Positions Met1–Ala33 are disordered. Positions Gln21–Ala33 are enriched in low complexity.

Belongs to the GrpE family. In terms of assembly, homodimer.

It localises to the cytoplasm. Functionally, participates actively in the response to hyperosmotic and heat shock by preventing the aggregation of stress-denatured proteins, in association with DnaK and GrpE. It is the nucleotide exchange factor for DnaK and may function as a thermosensor. Unfolded proteins bind initially to DnaJ; upon interaction with the DnaJ-bound protein, DnaK hydrolyzes its bound ATP, resulting in the formation of a stable complex. GrpE releases ADP from DnaK; ATP binding to DnaK triggers the release of the substrate protein, thus completing the reaction cycle. Several rounds of ATP-dependent interactions between DnaJ, DnaK and GrpE are required for fully efficient folding. This chain is Protein GrpE, found in Burkholderia cenocepacia (strain HI2424).